The sequence spans 504 residues: Subtilisin-like protease 1 (504 aa).

Residues 1-19 (MGVFRFISISLAAVSAANA) form the signal peptide. The propeptide occupies 20–116 (AQILSMPHAQ…VEPDTIVSVH (97 aa)). The region spanning 34–116 (SYIVMMKDDT…VEPDTIVSVH (83 aa)) is the Inhibitor I9 domain. One can recognise a Peptidase S8 domain in the interval 126–400 (SWGLARISNP…NVLINNGGAK (275 aa)). Residues D158 and H190 each act as charge relay system in the active site. The disordered stretch occupies residues 172-198 (AIWGSNQVNDGDDRDGSGHGTHTSGTM). N-linked (GlcNAc...) asparagine glycosylation is found at N233 and N251. Positions 282–294 (NDNQDAQSSSPAS) are enriched in polar residues. Residues 282–312 (NDNQDAQSSSPASEPSVCTVGSSAEDDSRSS) form a disordered region. S345 functions as the Charge relay system in the catalytic mechanism. The segment covering 378–394 (TSSITDAGPGTPTNVLI) has biased composition (polar residues). A disordered region spans residues 378-483 (TSSITDAGPG…YPGGDNFDFD (106 aa)). Pro residues-rich tracts occupy residues 405–449 (NPNP…PGQP) and 457–473 (APAP…PHTP).

Belongs to the peptidase S8 family.

Its subcellular location is the secreted. Its function is as follows. Secreted subtilisin-like serine protease with keratinolytic activity that contributes to pathogenicity. In Trichophyton rubrum (Athlete's foot fungus), this protein is Subtilisin-like protease 1 (SUB1).